A 299-amino-acid polypeptide reads, in one-letter code: Phosphoribosylaminoimidazole-succinocarboxamide synthase (299 aa).

This sequence belongs to the SAICAR synthetase family.

The catalysed reaction is 5-amino-1-(5-phospho-D-ribosyl)imidazole-4-carboxylate + L-aspartate + ATP = (2S)-2-[5-amino-1-(5-phospho-beta-D-ribosyl)imidazole-4-carboxamido]succinate + ADP + phosphate + 2 H(+). The protein operates within purine metabolism; IMP biosynthesis via de novo pathway; 5-amino-1-(5-phospho-D-ribosyl)imidazole-4-carboxamide from 5-amino-1-(5-phospho-D-ribosyl)imidazole-4-carboxylate: step 1/2. This is Phosphoribosylaminoimidazole-succinocarboxamide synthase from Streptomyces coelicolor (strain ATCC BAA-471 / A3(2) / M145).